The following is a 232-amino-acid chain: Fibrillarin-like rRNA/tRNA 2'-O-methyltransferase (232 aa).

S-adenosyl-L-methionine-binding positions include 89–90 (TT), 108–109 (EF), 133–134 (DA), and 153–156 (DIAQ).

The protein belongs to the methyltransferase superfamily. Fibrillarin family. In terms of assembly, interacts with nop5. Component of box C/D small ribonucleoprotein (sRNP) particles that contain rpl7ae, FlpA and nop5, plus a guide RNA.

Involved in pre-rRNA and tRNA processing. Utilizes the methyl donor S-adenosyl-L-methionine to catalyze the site-specific 2'-hydroxyl methylation of ribose moieties in rRNA and tRNA. Site specificity is provided by a guide RNA that base pairs with the substrate. Methylation occurs at a characteristic distance from the sequence involved in base pairing with the guide RNA. The protein is Fibrillarin-like rRNA/tRNA 2'-O-methyltransferase of Saccharolobus islandicus (strain M.16.27) (Sulfolobus islandicus).